The following is a 759-amino-acid chain: uncharacterized protein (759 aa).

Disordered stretches follow at residues 269 to 328 (SQRV…GEEP) and 406 to 759 (LPLR…AQTA). The segment covering 289–299 (AGGKEEAERGG) has biased composition (basic and acidic residues). Positions 406-415 (LPLRPPSGSG) are enriched in low complexity. Residues 417-430 (AARKPGYEKEEGRG) are compositionally biased toward basic and acidic residues. A compositionally biased stretch (low complexity) spans 431-444 (RATTASATAATSPR). Basic and acidic residues-rich tracts occupy residues 469-518 (PESE…RGEH) and 525-545 (DSGR…EKGT). Over residues 585–599 (WVPPPHLLFPSPLPS) the composition is skewed to pro residues. The span at 659 to 680 (SLSSLSSSSSSSSSSSPSYSPS) shows a compositional bias: low complexity. Residues 681–690 (PLSPPSPVSP) are compositionally biased toward pro residues. Composition is skewed to low complexity over residues 691-704 (SSPR…IRSP) and 728-746 (PPFS…PSAP).

This is an uncharacterized protein from Human herpesvirus 6B (strain Z29) (HHV-6 variant B).